The following is a 1535-amino-acid chain: Protein artichoke (1535 aa).

Positions Met1–Ala19 are cleaved as a signal peptide. 34 LRR repeats span residues Lys64–Ser87, Gln89–Glu110, Glu112–Gly135, Met136–Gly157, Leu158–His181, Pro183–Gly206, Leu207–Arg230, Leu231–Asp256, Leu257–Asp280, Leu281–Arg304, Pro306–Gln328, Gly331–Ala356, Leu357–Gly380, Gly382–Ala404, Pro406–Leu429, Pro430–Gly452, Leu453–His476, Pro478–His500, Leu521–Asp545, Leu548–Gly571, Met573–Gly595, Gln597–Pro619, Leu620–Asn643, Ser645–Thr667, Arg669–Leu691, Asn692–Gly714, Arg716–Asn738, Leu739–Gly762, Asp764–Glu786, Pro788–Asn810, Ala811–Ser834, Met835–Ala858, Asn860–Thr882, and Met883–Asn906. In terms of domain architecture, LRRCT spans Asn919 to Val963. Disordered stretches follow at residues His1036–Ile1055, Thr1253–Tyr1331, Val1377–Thr1416, and Ala1429–Ala1449. Over residues Thr1253–Ala1270 the composition is skewed to polar residues. Composition is skewed to low complexity over residues Thr1271 to Thr1285 and Thr1293 to Thr1315. Polar residues-rich tracts occupy residues Pro1316–Asp1328 and Val1377–Thr1391. Pro residues predominate over residues Thr1398 to Pro1407.

The protein localises to the secreted. It localises to the extracellular space. It is found in the extracellular matrix. Its subcellular location is the cytoplasm. Its function is as follows. Required for normal morphology and function of ciliated sensory organs. The polypeptide is Protein artichoke (Drosophila melanogaster (Fruit fly)).